The primary structure comprises 319 residues: Protein MGF 360-8L (319 aa).

This sequence belongs to the asfivirus MGF 360 family.

Its function is as follows. Plays a role in virus cell tropism, and may be required for efficient virus replication in macrophages. This chain is Protein MGF 360-8L, found in African swine fever virus (isolate Warthog/Namibia/Wart80/1980) (ASFV).